The following is a 173-amino-acid chain: Large ribosomal subunit protein uL16 (173 aa).

The protein belongs to the universal ribosomal protein uL16 family.

The chain is Large ribosomal subunit protein uL16 from Methanosarcina mazei (strain ATCC BAA-159 / DSM 3647 / Goe1 / Go1 / JCM 11833 / OCM 88) (Methanosarcina frisia).